The chain runs to 224 residues: Ribosomal RNA small subunit methyltransferase G (224 aa).

S-adenosyl-L-methionine is bound by residues Gly-89, Leu-94, 140 to 141, and Arg-154; that span reads IE.

It belongs to the methyltransferase superfamily. RNA methyltransferase RsmG family.

It is found in the cytoplasm. The catalysed reaction is guanosine(527) in 16S rRNA + S-adenosyl-L-methionine = N(7)-methylguanosine(527) in 16S rRNA + S-adenosyl-L-homocysteine. Its function is as follows. Specifically methylates the N7 position of guanine in position 527 of 16S rRNA. This Bordetella avium (strain 197N) protein is Ribosomal RNA small subunit methyltransferase G.